A 172-amino-acid chain; its full sequence is ATP synthase subunit b (172 aa).

Residues 18-38 form a helical membrane-spanning segment; it reads IVWSLIILVIVAVFFYKFFMP.

It belongs to the ATPase B chain family. In terms of assembly, F-type ATPases have 2 components, F(1) - the catalytic core - and F(0) - the membrane proton channel. F(1) has five subunits: alpha(3), beta(3), gamma(1), delta(1), epsilon(1). F(0) has three main subunits: a(1), b(2) and c(10-14). The alpha and beta chains form an alternating ring which encloses part of the gamma chain. F(1) is attached to F(0) by a central stalk formed by the gamma and epsilon chains, while a peripheral stalk is formed by the delta and b chains.

It localises to the cell membrane. Functionally, f(1)F(0) ATP synthase produces ATP from ADP in the presence of a proton or sodium gradient. F-type ATPases consist of two structural domains, F(1) containing the extramembraneous catalytic core and F(0) containing the membrane proton channel, linked together by a central stalk and a peripheral stalk. During catalysis, ATP synthesis in the catalytic domain of F(1) is coupled via a rotary mechanism of the central stalk subunits to proton translocation. Its function is as follows. Component of the F(0) channel, it forms part of the peripheral stalk, linking F(1) to F(0). The polypeptide is ATP synthase subunit b (Bifidobacterium longum (strain DJO10A)).